The chain runs to 121 residues: uncharacterized protein (121 aa).

A run of 2 helical transmembrane segments spans residues 26-46 (FIAL…ILVL) and 72-92 (AFLT…WLGL).

The protein resides in the membrane. This is an uncharacterized protein from Saccharomyces cerevisiae (strain ATCC 204508 / S288c) (Baker's yeast).